An 85-amino-acid polypeptide reads, in one-letter code: RNA-binding protein Hfq (85 aa).

In terms of domain architecture, Sm spans 9–69 (DQLLNTARKD…ISTIIPAKII (61 aa)).

Belongs to the Hfq family. Homohexamer.

RNA chaperone that binds small regulatory RNA (sRNAs) and mRNAs to facilitate mRNA translational regulation in response to envelope stress, environmental stress and changes in metabolite concentrations. Also binds with high specificity to tRNAs. The protein is RNA-binding protein Hfq of Leptospira interrogans serogroup Icterohaemorrhagiae serovar copenhageni (strain Fiocruz L1-130).